Here is a 336-residue protein sequence, read N- to C-terminus: Nuclear envelope-associated protein 1 (336 aa).

The stretch at 125–261 forms a coiled coil; sequence CSMLKQQLDD…RRTDQDLKKK (137 aa). The Bipartite nuclear localization signal signature appears at 240-261; that stretch reads KTKELESQLEKQRRTDQDLKKK. A helical transmembrane segment spans residues 313 to 330; sequence FWDNSGFKIVVSMSMLML.

Forms heteromers with NEAP2 and NEAP3. Interacts with SUN1; SUN2 and bZIP18.

The protein resides in the nucleus inner membrane. Its subcellular location is the nucleus. It is found in the nucleoplasm. The chain is Nuclear envelope-associated protein 1 from Arabidopsis thaliana (Mouse-ear cress).